Here is a 201-residue protein sequence, read N- to C-terminus: Peptide deformylase (201 aa).

Fe cation is bound by residues C121 and H163. E164 is an active-site residue. H167 is a Fe cation binding site.

It belongs to the polypeptide deformylase family. Fe(2+) serves as cofactor.

It catalyses the reaction N-terminal N-formyl-L-methionyl-[peptide] + H2O = N-terminal L-methionyl-[peptide] + formate. Functionally, removes the formyl group from the N-terminal Met of newly synthesized proteins. Requires at least a dipeptide for an efficient rate of reaction. N-terminal L-methionine is a prerequisite for activity but the enzyme has broad specificity at other positions. The polypeptide is Peptide deformylase (Synechococcus sp. (strain CC9902)).